Consider the following 490-residue polypeptide: Betaine aldehyde dehydrogenase (490 aa).

Asp93 provides a ligand contact to K(+). Position 150-152 (150-152 (GAW)) interacts with NAD(+). The active-site Charge relay system is Lys162. 176 to 179 (KPSE) is an NAD(+) binding site. Val180 lines the K(+) pocket. Residue 230–233 (GIAS) coordinates NAD(+). K(+) is bound at residue Leu246. The active-site Proton acceptor is Glu252. Residues Gly254, Cys286, and Glu387 each contribute to the NAD(+) site. The active-site Nucleophile is Cys286. Position 286 is a cysteine sulfenic acid (-SOH) (Cys286). K(+)-binding residues include Lys457 and Gly460. Glu464 functions as the Charge relay system in the catalytic mechanism.

It belongs to the aldehyde dehydrogenase family. As to quaternary structure, dimer of dimers. It depends on K(+) as a cofactor.

It catalyses the reaction betaine aldehyde + NAD(+) + H2O = glycine betaine + NADH + 2 H(+). It functions in the pathway amine and polyamine biosynthesis; betaine biosynthesis via choline pathway; betaine from betaine aldehyde: step 1/1. Its function is as follows. Involved in the biosynthesis of the osmoprotectant glycine betaine. Catalyzes the irreversible oxidation of betaine aldehyde to the corresponding acid. This is Betaine aldehyde dehydrogenase from Yersinia pseudotuberculosis serotype O:1b (strain IP 31758).